Reading from the N-terminus, the 304-residue chain is GTP cyclohydrolase FolE2 (304 aa).

It belongs to the GTP cyclohydrolase IV family.

It catalyses the reaction GTP + H2O = 7,8-dihydroneopterin 3'-triphosphate + formate + H(+). Its pathway is cofactor biosynthesis; 7,8-dihydroneopterin triphosphate biosynthesis; 7,8-dihydroneopterin triphosphate from GTP: step 1/1. In terms of biological role, converts GTP to 7,8-dihydroneopterin triphosphate. In Bdellovibrio bacteriovorus (strain ATCC 15356 / DSM 50701 / NCIMB 9529 / HD100), this protein is GTP cyclohydrolase FolE2.